Consider the following 349-residue polypeptide: Hydroxymethylglutaryl-CoA synthase (349 aa).

Positions 29 and 30 each coordinate (3S)-3-hydroxy-3-methylglutaryl-CoA. Residue glutamate 81 is the Proton donor/acceptor of the active site. Residues cysteine 113 and threonine 154 each coordinate (3S)-3-hydroxy-3-methylglutaryl-CoA. The active-site Acyl-thioester intermediate is cysteine 113. Arginine 202 provides a ligand contact to CoA. (3S)-3-hydroxy-3-methylglutaryl-CoA is bound by residues threonine 204 and histidine 237. Histidine 237 acts as the Proton donor/acceptor in catalysis. Lysine 242 provides a ligand contact to CoA. 3 residues coordinate (3S)-3-hydroxy-3-methylglutaryl-CoA: lysine 246, asparagine 269, and serine 299.

It belongs to the thiolase-like superfamily. Archaeal HMG-CoA synthase family. As to quaternary structure, interacts with acetoacetyl-CoA thiolase that catalyzes the precedent step in the pathway and with a DUF35 protein. The acetoacetyl-CoA thiolase/HMG-CoA synthase complex channels the intermediate via a fused CoA-binding site, which allows for efficient coupling of the endergonic thiolase reaction with the exergonic HMGCS reaction.

The catalysed reaction is acetoacetyl-CoA + acetyl-CoA + H2O = (3S)-3-hydroxy-3-methylglutaryl-CoA + CoA + H(+). The protein operates within metabolic intermediate biosynthesis; (R)-mevalonate biosynthesis; (R)-mevalonate from acetyl-CoA: step 2/3. Its function is as follows. Catalyzes the condensation of acetyl-CoA with acetoacetyl-CoA to form 3-hydroxy-3-methylglutaryl-CoA (HMG-CoA). Functions in the mevalonate (MVA) pathway leading to isopentenyl diphosphate (IPP), a key precursor for the biosynthesis of isoprenoid compounds that are building blocks of archaeal membrane lipids. The chain is Hydroxymethylglutaryl-CoA synthase from Methanosarcina acetivorans (strain ATCC 35395 / DSM 2834 / JCM 12185 / C2A).